We begin with the raw amino-acid sequence, 1077 residues long: Histone deacetylase 4 (1077 aa).

Residues 66–169 (REQQLQQELL…GKESAVASTE (104 aa)) adopt a coiled-coil conformation. Positions 117–312 (MLAMKHQQEL…NSSSGNVSTE (196 aa)) are interaction with MEF2A. Positions 132–162 (KLERHRQEQELEKQHREQKLQQLKNKEKGKE) are enriched in basic and acidic residues. 3 disordered regions span residues 132–167 (KLER…AVAS), 204–225 (KTQH…ASYN), and 239–327 (PLRK…AETS). The span at 205–224 (TQHSSLDQSSPPQSGVSASY) shows a compositional bias: polar residues. Ser-209 is modified (phosphoserine). Ser-245 carries the post-translational modification Phosphoserine; by CaMK4 and SIK1. Positions 258-273 (KVAERRSSPLLRRKDG) are enriched in basic and acidic residues. Low complexity predominate over residues 289 to 310 (SACSSAPGSGPSSPNSSSGNVS). The short motif at 348–353 (PSLPNI) is the PxLPxI/L motif; mediates interaction with ANKRA2 and 14-3-3 proteins element. Ser-349 bears the Phosphoserine mark. Ser-466 is subject to Phosphoserine; by CaMK4 and SIK1. 3 disordered regions span residues 508–530 (SKPS…ELRE), 542–582 (RLPG…RPAT), and 623–646 (RPLS…EPPT). Over residues 515 to 530 (RQPESHPEETEEELRE) the composition is skewed to basic and acidic residues. A Glycyl lysine isopeptide (Lys-Gly) (interchain with G-Cter in SUMO) cross-link involves residue Lys-557. Ser-563, Ser-630, and Ser-631 each carry phosphoserine. Polar residues predominate over residues 627-639 (RAQSSPASATFPM). Positions 653 to 1077 (GLVYDTLMLK…EEPMEEEPPL (425 aa)) are histone deacetylase. Zn(2+) is bound by residues Cys-665, Cys-667, His-673, and Cys-744. Residue His-796 is part of the active site. Residues 1044–1077 (EEAETVTAMASLSVGVKPAEKRSEEEPMEEEPPL) carry the Nuclear export signal motif. Positions 1052–1077 (MASLSVGVKPAEKRSEEEPMEEEPPL) are disordered.

It belongs to the histone deacetylase family. HD type 2 subfamily. As to quaternary structure, homodimer. Homodimerization via its N-terminal domain. Interacts with HDAC7. Interacts with MEF2A, MEF2C, MEF2D, MORC2 and NR2C1. Interacts with a 14-3-3 chaperone proteins in a phosphorylation dependent manner. Interacts with 14-3-3 protein YWHAB. Interacts with KDM5B and AHRR. Interacts with BTBD14B. Interacts with MYOCD. Interacts (via PxLPxI/L motif) with ANKRA2 (via ankyrin repeats). Interacts with CUL7 (as part of the 3M complex); negatively regulated by ANKRA2. Interacts with EP300 in the presence of TFAP2C. Interacts with HSPA1A and HSPA1B leading to their deacetylation at 'Lys-77'. Interacts with ZBTB7B; the interaction allows the recruitment of HDAC4 on CD8 loci for deacetylation and possible inhibition of CD8 genes expression. Interacts with DHX36. Interacts with SIK3; this interaction leads to HDAC4 retention in the cytoplasm. Post-translationally, phosphorylated by CaMK4 at Ser-245, Ser-466 and Ser-630. Phosphorylation at other residues by CaMK2D is required for the interaction with 14-3-3. Phosphorylation at Ser-349, within the PxLPxI/L motif, impairs the binding of ANKRA2 but generates a high-affinity docking site for 14-3-3. Sumoylation on Lys-557 is promoted by the E3 SUMO-protein ligase RANBP2, and prevented by phosphorylation by CaMK4.

Its subcellular location is the nucleus. The protein localises to the cytoplasm. It carries out the reaction N(6)-acetyl-L-lysyl-[histone] + H2O = L-lysyl-[histone] + acetate. Functionally, responsible for the deacetylation of lysine residues on the N-terminal part of the core histones (H2A, H2B, H3 and H4). Histone deacetylation gives a tag for epigenetic repression and plays an important role in transcriptional regulation, cell cycle progression and developmental events. Histone deacetylases act via the formation of large multiprotein complexes. Involved in muscle maturation via its interaction with the myocyte enhancer factors such as MEF2A, MEF2C and MEF2D. Deacetylates HSPA1A and HSPA1B at 'Lys-77' leading to their preferential binding to co-chaperone STUB1. This chain is Histone deacetylase 4 (Hdac4), found in Rattus norvegicus (Rat).